We begin with the raw amino-acid sequence, 446 residues long: Serine--tRNA ligase, mitochondrial (446 aa).

An L-serine-binding site is contributed by 251 to 253 (TAE). Residues 284–286 (RAE) and Val300 contribute to the ATP site. Residue Glu307 participates in L-serine binding. Residue 371–374 (EISS) coordinates ATP. Residue Thr407 coordinates L-serine.

This sequence belongs to the class-II aminoacyl-tRNA synthetase family. Type-1 seryl-tRNA synthetase subfamily. Homodimer. The tRNA molecule binds across the dimer.

It is found in the mitochondrion matrix. It carries out the reaction tRNA(Ser) + L-serine + ATP = L-seryl-tRNA(Ser) + AMP + diphosphate + H(+). Catalyzes the attachment of serine to tRNA(Ser). In Saccharomyces cerevisiae (strain ATCC 204508 / S288c) (Baker's yeast), this protein is Serine--tRNA ligase, mitochondrial (DIA4).